Reading from the N-terminus, the 64-residue chain is Large ribosomal subunit protein bL35 (64 aa).

It belongs to the bacterial ribosomal protein bL35 family.

The chain is Large ribosomal subunit protein bL35 from Vibrio campbellii (strain ATCC BAA-1116).